Here is a 118-residue protein sequence, read N- to C-terminus: Transmembrane protein 243 (118 aa).

Met-1 is subject to N-acetylmethionine. Helical transmembrane passes span Leu-32 to Phe-52, Ile-62 to Tyr-82, and Leu-94 to His-114.

The protein belongs to the TMEM243 family. Widely expressed.

Its subcellular location is the membrane. This chain is Transmembrane protein 243 (TMEM243), found in Homo sapiens (Human).